Reading from the N-terminus, the 426-residue chain is UDP-N-acetylglucosamine 1-carboxyvinyltransferase (426 aa).

Position 24 to 25 (lysine 24 to asparagine 25) interacts with phosphoenolpyruvate. Arginine 95 contacts UDP-N-acetyl-alpha-D-glucosamine. Cysteine 119 (proton donor) is an active-site residue. The residue at position 119 (cysteine 119) is a 2-(S-cysteinyl)pyruvic acid O-phosphothioketal. UDP-N-acetyl-alpha-D-glucosamine is bound by residues arginine 124–glutamine 128, aspartate 308, and valine 330.

It belongs to the EPSP synthase family. MurA subfamily.

The protein resides in the cytoplasm. It carries out the reaction phosphoenolpyruvate + UDP-N-acetyl-alpha-D-glucosamine = UDP-N-acetyl-3-O-(1-carboxyvinyl)-alpha-D-glucosamine + phosphate. Its pathway is cell wall biogenesis; peptidoglycan biosynthesis. In terms of biological role, cell wall formation. Adds enolpyruvyl to UDP-N-acetylglucosamine. The chain is UDP-N-acetylglucosamine 1-carboxyvinyltransferase from Deinococcus radiodurans (strain ATCC 13939 / DSM 20539 / JCM 16871 / CCUG 27074 / LMG 4051 / NBRC 15346 / NCIMB 9279 / VKM B-1422 / R1).